The sequence spans 999 residues: Receptor-like protein kinase 5 (999 aa).

The N-terminal stretch at 1 to 14 (MLYCLILLLCLSST) is a signal peptide. Residues 15–621 (YLPSLSLNQD…LCRKITRSKN (607 aa)) are Extracellular-facing. LRR repeat units lie at residues 90 to 112 (SLHS…DFDT), 115 to 137 (NLIS…LPFN), 140 to 161 (NLKF…SFGE), 164 to 186 (KLES…LGNV), and 188 to 208 (TLKE…PSQL). N-linked (GlcNAc...) asparagine glycans are attached at residues N98 and N102. Residues N150 and N185 are each glycosylated (N-linked (GlcNAc...) asparagine). Residue N210 is glycosylated (N-linked (GlcNAc...) asparagine). LRR repeat units follow at residues 213–236 (ELQV…SRLT) and 237–259 (SLVN…ITQL). Residues N269 and N282 are each glycosylated (N-linked (GlcNAc...) asparagine). 12 LRR repeats span residues 285–307 (TLKR…LNLL), 308–330 (NLES…ITRS), 332–353 (TLSE…QLGA), 356–378 (PLQY…VCGE), 380–402 (KLEY…LGKC), 404–427 (SLTR…WGLP), 428–450 (RLSL…IIGA), 452–474 (NLSN…IGSL), 500–523 (QLSR…RGWK), 524–546 (NLNE…VGIL), 548–569 (VLNY…ELQN), and 571–593 (KLNV…YANK). The N-linked (GlcNAc...) asparagine glycan is linked to N452. N-linked (GlcNAc...) asparagine glycosylation occurs at N576. The helical transmembrane segment at 622–641 (IGYVWILLTIFLLAGLVFVV) threads the bilayer. The Cytoplasmic portion of the chain corresponds to 642 to 999 (GIVMFIAKCR…PYYTEDLNSV (358 aa)). The region spanning 683–968 (LDEKNVIGFG…KVVIMLQEVS (286 aa)) is the Protein kinase domain. ATP contacts are provided by residues 689–697 (IGFGSSGKV) and K711. 2 positions are modified to phosphotyrosine: Y766 and Y806. D819 serves as the catalytic Proton acceptor. Phosphoserine is present on S856. 2 positions are modified to phosphotyrosine: Y864 and Y871. T872 carries the phosphothreonine modification. The interval 972-999 (PCSSPNTSKRSKTGGKLSPYYTEDLNSV) is disordered.

The protein belongs to the protein kinase superfamily. Ser/Thr protein kinase family. Interacts with CST. Binds to IDA. Requires Mg(2+) as cofactor. It depends on Mn(2+) as a cofactor. In terms of processing, autophosphorylated on Ser, Thr and Tyr residues. As to expression, expressed in roots and rosettes. Expressed at the base of petioles and pedicels, and in the abscission zones of the floral organs.

The protein resides in the cell membrane. The catalysed reaction is L-seryl-[protein] + ATP = O-phospho-L-seryl-[protein] + ADP + H(+). The enzyme catalyses L-threonyl-[protein] + ATP = O-phospho-L-threonyl-[protein] + ADP + H(+). It catalyses the reaction L-tyrosyl-[protein] + ATP = O-phospho-L-tyrosyl-[protein] + ADP + H(+). Its function is as follows. Receptor with a dual specificity kinase activity acting on both serine/threonine- and tyrosine-containing substrates that controls floral organ abscission. May interact with the 'INFLORESCENCE DEFICIENT IN ABSCISSION' (IDA) ligands family. The polypeptide is Receptor-like protein kinase 5 (RLK5) (Arabidopsis thaliana (Mouse-ear cress)).